The primary structure comprises 57 residues: uncharacterized protein (57 aa).

The interval 1–57 is disordered; it reads MDDTLPKQMTPTDTSPLKEEQAHCNNKTLENQPKNINDNKCTDSQNTDLQNTEPSKV. A compositionally biased stretch (polar residues) spans 23 to 57; the sequence is HCNNKTLENQPKNINDNKCTDSQNTDLQNTEPSKV.

This is an uncharacterized protein from Ornithodoros (relapsing fever ticks).